We begin with the raw amino-acid sequence, 170 residues long: MSKIGLFFGTQTGNTEELAQAIQAAFGGSDIVELFDVAEVDIEALRDFDQLIIGCPTWNVGELQSDWEALYDDLDDVDFSGKTIAYFGAGDQVGYADNFQDAMGVLEEKITSLGGKTVGQWPTAGYDHSESKAERDGKFVGLAIDEDNQPELTAERIQAWVAQLKPAFGL.

Residues 4–165 form the Flavodoxin-like domain; it reads IGLFFGTQTG…RIQAWVAQLK (162 aa).

Belongs to the flavodoxin family. The cofactor is FMN.

In terms of biological role, low-potential electron donor to a number of redox enzymes. The protein is Flavodoxin (isiB) of Picosynechococcus sp. (strain ATCC 27264 / PCC 7002 / PR-6) (Agmenellum quadruplicatum).